Reading from the N-terminus, the 325-residue chain is D-alanine--D-alanine ligase (325 aa).

An ATP-grasp domain is found at 102-300 (KQIFRAAGIP…FTELVERMLQ (199 aa)). 130–185 (AAELGSPLVIKPSNNGSTVGISIVRDERSFAQGLELARSVSSRIFLERYVPGKEIT) is a binding site for ATP. Mg(2+) contacts are provided by D254, E267, and N269.

The protein belongs to the D-alanine--D-alanine ligase family. Mg(2+) serves as cofactor. Mn(2+) is required as a cofactor.

Its subcellular location is the cytoplasm. It catalyses the reaction 2 D-alanine + ATP = D-alanyl-D-alanine + ADP + phosphate + H(+). It functions in the pathway cell wall biogenesis; peptidoglycan biosynthesis. Functionally, cell wall formation. The sequence is that of D-alanine--D-alanine ligase from Synechococcus sp. (strain JA-2-3B'a(2-13)) (Cyanobacteria bacterium Yellowstone B-Prime).